A 151-amino-acid polypeptide reads, in one-letter code: Probable cGMP 3',5'-cyclic phosphodiesterase subunit delta (151 aa).

The protein belongs to the PDE6D/unc-119 family. Interacts with Pde6.

It is found in the nucleus. It localises to the cytoplasm. The chain is Probable cGMP 3',5'-cyclic phosphodiesterase subunit delta from Drosophila virilis (Fruit fly).